The primary structure comprises 528 residues: Inorganic phosphate transporter 1-2 (528 aa).

Residues 1–24 (MAGSQLNVLVKLDQAKTQWYHFMA) lie on the Cytoplasmic side of the membrane. A helical transmembrane segment spans residues 25 to 45 (IVIAGMGFFTDAYDLFCIALV). Topologically, residues 46 to 71 (TKLLGRLYYTDITKPNPGTLPPNVSS) are extracellular. A helical transmembrane segment spans residues 72–92 (AVTGVALCGTLAGQLFFGWLG). Over 93 to 99 (DKLGRKS) the chain is Cytoplasmic. A helical transmembrane segment spans residues 100-120 (VYGFTLILMVVCSIASGLSFG). Residues 121-125 (HTPKS) lie on the Extracellular side of the membrane. The helical transmembrane segment at 126–146 (VIATLCFFRFWLGFGIGGDYP) threads the bilayer. The Cytoplasmic portion of the chain corresponds to 147–163 (LSATIMSEYASKKTRGA). A helical membrane pass occupies residues 164-184 (FIAAVFAMQGFGILFGAIVAL). Residues 185-212 (VVSAGFRHAYPAPSYAQNPAASLAPQAD) lie on the Extracellular side of the membrane. A helical transmembrane segment spans residues 213–232 (YTWRLILMFGTIPAGLTYYW). Topologically, residues 233 to 296 (RMKMPETARY…RQFMKRHGMH (64 aa)) are cytoplasmic. A helical membrane pass occupies residues 297–317 (LLATTSTWFLLDIAFYSQNLF). Topologically, residues 318–348 (QKDIFSKVGWIPPAKTMNALEELYRISRAQA) are extracellular. A helical membrane pass occupies residues 349 to 369 (LIALCGTIPGYWFTVAFIDIV). Residues 370–371 (GR) are Cytoplasmic-facing. A helical membrane pass occupies residues 372–392 (FWIQIMGFFMMTVFMLALGVP). At 393–405 (YDHWTHPAHHTGF) the chain is on the extracellular side. Residues 406-426 (VVLYALTFFFANFGPNSTTFI) form a helical membrane-spanning segment. Topologically, residues 427-442 (VPAEIFPARLRSTCHG) are cytoplasmic. A helical transmembrane segment spans residues 443 to 463 (ISAASGKAGAIIGAFGFLYAA). Residues 464 to 481 (QDQHNPDAGYSRGIGIRN) lie on the Extracellular side of the membrane. Residues 482–502 (ALFVLAGTNFLGMLMTLLVPE) traverse the membrane as a helical segment. The Cytoplasmic portion of the chain corresponds to 503–528 (SKGLSLEEMSKDNVVDETAQEAIAQA).

This sequence belongs to the major facilitator superfamily. Phosphate:H(+) symporter (TC 2.A.1.9) family. In terms of tissue distribution, expressed in the root stele and leaf phloem and xylem.

The protein localises to the membrane. Its function is as follows. Low-affinity transporter for inorganic phosphate (Pi). Involved in internal Pi transport from root to shoot. Responsible for most of the PHR2-mediated accumulation of excess shoot Pi under abundant Pi conditions, but not for PHO2-mediated accumulation of excess shoot Pi. Acts as a H(+):phosphate symporter. In Oryza sativa subsp. japonica (Rice), this protein is Inorganic phosphate transporter 1-2 (PTH1-2).